Consider the following 696-residue polypeptide: Spindle assembly checkpoint component MAD1 (696 aa).

Disordered regions lie at residues 1–22 (MSTG…SINN) and 394–415 (QIHA…TENK). Basic and acidic residues predominate over residues 402 to 413 (KQQEQEKEENTE).

Belongs to the MAD1 family. As to quaternary structure, component of the mitotic checkpoint complex (MCC).

The protein localises to the nucleus. In terms of biological role, central component of the spindle assembly checkpoint which is a feedback control that prevents cells with incompletely assembled spindles from leaving mitosis. The sequence is that of Spindle assembly checkpoint component MAD1 from Candida albicans (strain SC5314 / ATCC MYA-2876) (Yeast).